We begin with the raw amino-acid sequence, 801 residues long: DNA mismatch repair protein MutS (801 aa).

An ATP-binding site is contributed by 590–597 (GPNMSGKS).

It belongs to the DNA mismatch repair MutS family.

Its function is as follows. This protein is involved in the repair of mismatches in DNA. It is possible that it carries out the mismatch recognition step. This protein has a weak ATPase activity. This chain is DNA mismatch repair protein MutS, found in Thermotoga neapolitana (strain ATCC 49049 / DSM 4359 / NBRC 107923 / NS-E).